The sequence spans 147 residues: Hemoglobin subunit epsilon-Y2 (147 aa).

The 145-residue stretch at 3–147 (NFTAEEKTLI…VATALSHKYH (145 aa)) folds into the Globin domain. Ser51 carries the phosphoserine modification. Residues His64 and His93 each contribute to the heme b site.

The protein belongs to the globin family. High expression in yolk sac blood islands, fetal liver, and embryonic erythrocytes. Very low levels in adult liver and spleen.

Functionally, hemoglobin epsilon chain is a beta-type chain found in early embryos. This is Hemoglobin subunit epsilon-Y2 (Hbb-y) from Mus musculus (Mouse).